Here is a 497-residue protein sequence, read N- to C-terminus: Glutamyl-tRNA reductase (497 aa).

Residues 58 to 61, Ser-118, 123 to 125, and Gln-129 contribute to the substrate site; these read TCNR and EQQ. The active-site Nucleophile is Cys-59. 214–219 contacts NADP(+); sequence GAGAMA. Over residues 461-477 the composition is skewed to polar residues; that stretch reads VTQPGQADSSAAQTAGT. The disordered stretch occupies residues 461–486; sequence VTQPGQADSSAAQTAGTSARADQIPS.

Belongs to the glutamyl-tRNA reductase family. Homodimer.

The catalysed reaction is (S)-4-amino-5-oxopentanoate + tRNA(Glu) + NADP(+) = L-glutamyl-tRNA(Glu) + NADPH + H(+). It functions in the pathway porphyrin-containing compound metabolism; protoporphyrin-IX biosynthesis; 5-aminolevulinate from L-glutamyl-tRNA(Glu): step 1/2. Its function is as follows. Catalyzes the NADPH-dependent reduction of glutamyl-tRNA(Glu) to glutamate 1-semialdehyde (GSA). This Corynebacterium jeikeium (strain K411) protein is Glutamyl-tRNA reductase.